A 597-amino-acid polypeptide reads, in one-letter code: Integrator complex subunit 11 (597 aa).

6 residues coordinate Zn(2+): H68, H70, D72, H73, H157, and D178. The HXHXDH motif motif lies at 68–73; it reads HFHLDH. E203 is a catalytic residue. Zn(2+) is bound at residue H414. Residue K462 participates in 1D-myo-inositol hexakisphosphate binding.

It belongs to the metallo-beta-lactamase superfamily. RNA-metabolizing metallo-beta-lactamase-like family. INTS11 subfamily. As to quaternary structure, belongs to the multiprotein complex Integrator, at least composed of IntS1, IntS2, IntS3, IntS4, omd/IntS5, IntS6, defl/IntS7, IntS8, IntS9, IntS10, IntS11, IntS12, asun/IntS13, IntS14 and IntS15. The core complex associates with protein phosphatase 2A subunits mts/PP2A and Pp2A-29B, to form the Integrator-PP2A (INTAC) complex. IntS11 is part of the RNA endonuclease subcomplex, composed of IntS4, IntS9, IntS11 and inositol hexakisphosphate (InsP6). Interacts with Brat1; interaction is required for the assembly of the RNA endonuclease subcomplex and inhibits the endonuclease activity of IntS11 before formation of mature integrator complex. Zn(2+) serves as cofactor. In terms of tissue distribution, expressed in neurons and glia of the larval and adult brain.

The protein resides in the nucleus. Its subcellular location is the cytoplasm. It localises to the cytosol. Its activity is regulated as follows. The RNA endonuclease activity is inhibited by Brat1 that forms hyrogen bond and hydrophobic interactions with the active site. Functionally, RNA endonuclease component of the integrator complex, a multiprotein complex that terminates RNA polymerase II (Pol II) transcription in the promoter-proximal region of genes. The integrator complex provides a quality checkpoint during transcription elongation by driving premature transcription termination of transcripts that are unfavorably configured for transcriptional elongation: the complex terminates transcription by (1) catalyzing dephosphorylation of the C-terminal domain (CTD) of Pol II subunit Polr2A/Rbp1 and Spt5, and (2) degrading the exiting nascent RNA transcript via endonuclease activity. The integrator complex is also involved in the 3'-end processing of the U7 snRNA, and also the spliceosomal snRNAs U1, U2, U4 and U5. Within the integrator complex, IntS11 constitutes the RNA endonuclease subunit that degrades exiting nascent RNA transcripts. In Drosophila melanogaster (Fruit fly), this protein is Integrator complex subunit 11.